A 511-amino-acid chain; its full sequence is Acetylcholine receptor subunit alpha-type unc-38 (511 aa).

Residues 1–16 form the signal peptide; that stretch reads MRSFWLFLLLLLFCIS. Over 17–261 the chain is Extracellular; sequence FIKLTEGNED…QLRRKPLFYT (245 aa). A glycan (N-linked (GlcNAc...) asparagine) is linked at Asn-124. A disulfide bond links Cys-151 and Cys-165. N-linked (GlcNAc...) asparagine glycosylation is present at Asn-202. A disulfide bridge connects residues Cys-238 and Cys-239. The next 3 membrane-spanning stretches (helical) occupy residues 262-282, 291-311, and 324-344; these read VNLV…FYLP, LCIS…EIIP, and LLFT…SLNL. At 345–464 the chain is on the cytoplasmic side; sequence HFRTPTTHLM…WKYVAMVLDR (120 aa). The helical transmembrane segment at 465–485 threads the bilayer; that stretch reads LFLLIFSIACFVGTVIILLRA.

The protein belongs to the ligand-gated ion channel (TC 1.A.9) family. Acetylcholine receptor (TC 1.A.9.1) subfamily. As to quaternary structure, component of nicotinic acetylcholine receptor. In muscles, composed of 2 non-alpha subunits lev-1 and unc-29, and 3 alpha subunits unc-38, unc-63 and lev-8. In cholinergic motoneurons, composed of 2 non-alpha subunits acr-2 and acr-3, and 3 alpha subunits unc-38, unc-63 and acr-12.

It is found in the postsynaptic cell membrane. It localises to the cell membrane. In terms of biological role, alpha subunit of nicotinic acetylcholine receptor (nAChR). Probably acts in cholinergic motoneurons to regulate presynaptic neurotransmitter release, thereby ensuring normal level of excitation of cholinergic motoneurons during locomotion. Involved in nAChR sensitivity to nicotine. In Caenorhabditis elegans, this protein is Acetylcholine receptor subunit alpha-type unc-38 (unc-38).